The sequence spans 361 residues: Anthranilate phosphoribosyltransferase (361 aa).

5-phospho-alpha-D-ribose 1-diphosphate contacts are provided by residues Gly-101, 104–105 (GD), Thr-109, 111–114 (NIST), 129–137 (KHGNRGVSS), and Ser-141. Gly-101 lines the anthranilate pocket. Residue Ser-113 participates in Mg(2+) binding. Residue Asn-132 participates in anthranilate binding. Position 187 (Arg-187) interacts with anthranilate. Residues Asp-245 and Glu-246 each coordinate Mg(2+).

Belongs to the anthranilate phosphoribosyltransferase family. As to quaternary structure, homodimer. Mg(2+) is required as a cofactor.

The catalysed reaction is N-(5-phospho-beta-D-ribosyl)anthranilate + diphosphate = 5-phospho-alpha-D-ribose 1-diphosphate + anthranilate. It participates in amino-acid biosynthesis; L-tryptophan biosynthesis; L-tryptophan from chorismate: step 2/5. In terms of biological role, catalyzes the transfer of the phosphoribosyl group of 5-phosphorylribose-1-pyrophosphate (PRPP) to anthranilate to yield N-(5'-phosphoribosyl)-anthranilate (PRA). In Shewanella denitrificans (strain OS217 / ATCC BAA-1090 / DSM 15013), this protein is Anthranilate phosphoribosyltransferase.